The chain runs to 209 residues: Chaperone protein TorD (209 aa).

The protein belongs to the TorD/DmsD family. TorD subfamily.

The protein resides in the cytoplasm. Involved in the biogenesis of TorA. Acts on TorA before the insertion of the molybdenum cofactor and, as a result, probably favors a conformation of the apoenzyme that is competent for acquiring the cofactor. In Shewanella baltica (strain OS155 / ATCC BAA-1091), this protein is Chaperone protein TorD.